A 209-amino-acid polypeptide reads, in one-letter code: Uridine kinase (209 aa).

12–19 provides a ligand contact to ATP; that stretch reads GGSASGKT.

The protein belongs to the uridine kinase family.

The protein resides in the cytoplasm. It catalyses the reaction uridine + ATP = UMP + ADP + H(+). The catalysed reaction is cytidine + ATP = CMP + ADP + H(+). Its pathway is pyrimidine metabolism; CTP biosynthesis via salvage pathway; CTP from cytidine: step 1/3. The protein operates within pyrimidine metabolism; UMP biosynthesis via salvage pathway; UMP from uridine: step 1/1. The protein is Uridine kinase of Chloroflexus aggregans (strain MD-66 / DSM 9485).